The chain runs to 256 residues: Thiazole synthase (256 aa).

The active-site Schiff-base intermediate with DXP is the Lys-95. Residues Gly-156, 182 to 183 (AG), and 204 to 205 (NT) contribute to the 1-deoxy-D-xylulose 5-phosphate site.

Belongs to the ThiG family. As to quaternary structure, homotetramer. Forms heterodimers with either ThiH or ThiS.

It is found in the cytoplasm. The enzyme catalyses [ThiS sulfur-carrier protein]-C-terminal-Gly-aminoethanethioate + 2-iminoacetate + 1-deoxy-D-xylulose 5-phosphate = [ThiS sulfur-carrier protein]-C-terminal Gly-Gly + 2-[(2R,5Z)-2-carboxy-4-methylthiazol-5(2H)-ylidene]ethyl phosphate + 2 H2O + H(+). It participates in cofactor biosynthesis; thiamine diphosphate biosynthesis. Catalyzes the rearrangement of 1-deoxy-D-xylulose 5-phosphate (DXP) to produce the thiazole phosphate moiety of thiamine. Sulfur is provided by the thiocarboxylate moiety of the carrier protein ThiS. In vitro, sulfur can be provided by H(2)S. In Salmonella schwarzengrund (strain CVM19633), this protein is Thiazole synthase.